A 331-amino-acid polypeptide reads, in one-letter code: Probable cytosolic iron-sulfur protein assembly protein Ciao1 (331 aa).

7 WD repeats span residues 12–51, 57–96, 97–136, 142–181, 188–227, 246–285, and 297–331; these read GHKG…WTTK, GHKR…ATLE, GHEN…EFEC, AHSQ…SDWD, SHTS…NDAG, EHSR…KRDA, and AHEQ…KLQE.

The protein belongs to the WD repeat CIA1 family.

In terms of biological role, essential component of the cytosolic iron-sulfur (Fe/S) protein assembly machinery. Required for the maturation of extramitochondrial Fe/S proteins. This is Probable cytosolic iron-sulfur protein assembly protein Ciao1 from Drosophila virilis (Fruit fly).